A 355-amino-acid polypeptide reads, in one-letter code: G protein alpha i subunit (355 aa).

Gly-2 carries the N-myristoyl glycine lipid modification. Cys-3 carries the S-palmitoyl cysteine lipid modification. The G-alpha domain maps to 33–355 (SEVKLLLLGA…KNNLKQIGLF (323 aa)). Residues 36-49 (KLLLLGAGESGKST) form a G1 motif region. GTP is bound by residues 41 to 48 (GAGESGKS), 176 to 182 (LRTRVKT), 201 to 205 (DVGGQ), 270 to 273 (NKKD), and Ala-327. Mg(2+) contacts are provided by Ser-48 and Thr-182. Positions 174-182 (DVLRTRVKT) are G2 motif. The interval 197–206 (FKLFDVGGQR) is G3 motif. Positions 266–273 (ILFLNKKD) are G4 motif. The tract at residues 325 to 330 (TCATDT) is G5 motif.

It belongs to the G-alpha family. G(i/o/t/z) subfamily. In terms of assembly, g proteins are composed of 3 units; alpha, beta and gamma. The alpha chain contains the guanine nucleotide binding site. Interacts (via GDP- or GTP-bound forms) with loco (via GoLoco and RGS domains). Interacts with raps/pins.

Its subcellular location is the cell membrane. It is found in the apical cell membrane. In terms of biological role, guanine nucleotide-binding proteins (G proteins) are involved as modulators or transducers in various transmembrane signaling systems. Plays a role in glial cell differentiation during embryogenesis; loco, Galphao and the G-protein coupled receptor, moody, are required in the surface glia to achieve effective insulation of the nerve cord. The protein is G protein alpha i subunit (Galphai) of Drosophila melanogaster (Fruit fly).